A 344-amino-acid chain; its full sequence is L-rhamnose-proton symporter (344 aa).

The next 10 membrane-spanning stretches (helical) occupy residues Ala-4–Ala-24, Trp-38–Leu-58, Phe-68–Ile-88, Met-101–Ile-121, Thr-137–Leu-157, Leu-175–Ala-195, Leu-214–Ile-234, Val-259–Gly-279, Ile-290–Leu-310, and Val-323–Ala-343.

The protein belongs to the L-rhamnose transporter (TC 2.A.7.6) family.

It localises to the cell inner membrane. The catalysed reaction is L-rhamnopyranose(in) + H(+)(in) = L-rhamnopyranose(out) + H(+)(out). Uptake of L-rhamnose across the cytoplasmic membrane with the concomitant transport of protons into the cell (symport system). The sequence is that of L-rhamnose-proton symporter from Shigella boydii serotype 18 (strain CDC 3083-94 / BS512).